A 529-amino-acid polypeptide reads, in one-letter code: Peptide chain release factor 3 (529 aa).

The tr-type G domain occupies 11–280; sequence AKRRTFAIIS…GLVEWAPAPM (270 aa). GTP contacts are provided by residues 20-27, 88-92, and 142-145; these read SHPDAGKT, DTPGH, and NKLD.

This sequence belongs to the TRAFAC class translation factor GTPase superfamily. Classic translation factor GTPase family. PrfC subfamily.

The protein localises to the cytoplasm. Its function is as follows. Increases the formation of ribosomal termination complexes and stimulates activities of RF-1 and RF-2. It binds guanine nucleotides and has strong preference for UGA stop codons. It may interact directly with the ribosome. The stimulation of RF-1 and RF-2 is significantly reduced by GTP and GDP, but not by GMP. In Yersinia enterocolitica serotype O:8 / biotype 1B (strain NCTC 13174 / 8081), this protein is Peptide chain release factor 3.